We begin with the raw amino-acid sequence, 157 residues long: Ribonuclease (157 aa).

Residues 1-34 form the signal peptide; the sequence is MMKMEGIALKKRLSWISVCLLVLVSAAGMLFSTA. The propeptide occupies 35-47; that stretch reads AKTETSSHKAHTE. The active-site Proton acceptor is Glu-120. The active-site Proton donor is the His-149.

This sequence belongs to the ribonuclease N1/T1 family.

The protein resides in the secreted. In terms of biological role, hydrolyzes phosphodiester bonds in RNA, poly- and oligoribonucleotides resulting in 3'-nucleoside monophosphates via 2',3'-cyclophosphate intermediates. In Bacillus amyloliquefaciens (Bacillus velezensis), this protein is Ribonuclease.